Reading from the N-terminus, the 111-residue chain is Putative carnobacteriocin-B2 immunity protein (111 aa).

In terms of biological role, could impart immunity to carnobacteriocin-B2 to naturally sensitive host strains. The polypeptide is Putative carnobacteriocin-B2 immunity protein (Carnobacterium maltaromaticum (Carnobacterium piscicola)).